The chain runs to 229 residues: NAD(P)H-quinone oxidoreductase subunit K, chloroplastic (229 aa).

C43, C44, C108, and C139 together coordinate [4Fe-4S] cluster.

This sequence belongs to the complex I 20 kDa subunit family. As to quaternary structure, NDH is composed of at least 16 different subunits, 5 of which are encoded in the nucleus. [4Fe-4S] cluster is required as a cofactor.

The protein resides in the plastid. The protein localises to the chloroplast thylakoid membrane. The enzyme catalyses a plastoquinone + NADH + (n+1) H(+)(in) = a plastoquinol + NAD(+) + n H(+)(out). It carries out the reaction a plastoquinone + NADPH + (n+1) H(+)(in) = a plastoquinol + NADP(+) + n H(+)(out). Its function is as follows. NDH shuttles electrons from NAD(P)H:plastoquinone, via FMN and iron-sulfur (Fe-S) centers, to quinones in the photosynthetic chain and possibly in a chloroplast respiratory chain. The immediate electron acceptor for the enzyme in this species is believed to be plastoquinone. Couples the redox reaction to proton translocation, and thus conserves the redox energy in a proton gradient. This is NAD(P)H-quinone oxidoreductase subunit K, chloroplastic from Aethionema cordifolium (Lebanon stonecress).